Reading from the N-terminus, the 336-residue chain is DNA polymerase beta (336 aa).

K(+) is bound by residues K59, L61, and V64. Na(+) is bound by residues K59, L61, and V64. The Nucleophile; Schiff-base intermediate with DNA; for 5'-dRP lyase activity role is filled by K71. R82 carries the omega-N-methylarginine; by PRMT6 modification. 3 residues coordinate K(+): T100, V102, and I105. Na(+) contacts are provided by T100, V102, and I105. R148 serves as a coordination point for a 2'-deoxyribonucleoside 5'-triphosphate. R151 is modified (omega-N-methylarginine; by PRMT6). A 2'-deoxyribonucleoside 5'-triphosphate contacts are provided by S179, R182, G188, and D189. Residues 182–191 (RGAESSGDID) are DNA-binding. Mg(2+)-binding residues include D189, D191, and D257.

It belongs to the DNA polymerase type-X family. Mg(2+) is required as a cofactor. Methylation by PRMT6 stimulates the polymerase activity by enhancing DNA binding and processivity. In terms of processing, ubiquitinated: monoubiquitinated by huwe1/arf-bp1. Monoubiquitinated protein is then the target of stub1/chip, which catalyzes polyubiquitination from monoubiquitin, leading to degradation by the proteasome. usp47 mediates the deubiquitination of monoubiquitinated protein, preventing polyubiquitination by STUB1/CHIP and its subsequent degradation.

It is found in the nucleus. The protein localises to the cytoplasm. The catalysed reaction is DNA(n) + a 2'-deoxyribonucleoside 5'-triphosphate = DNA(n+1) + diphosphate. It carries out the reaction a 5'-end 2'-deoxyribose-2'-deoxyribonucleotide-DNA = (2E,4S)-4-hydroxypenten-2-al-5-phosphate + a 5'-end 5'-phospho-2'-deoxyribonucleoside-DNA + H(+). The enzyme catalyses 2'-deoxyribonucleotide-(2'-deoxyribose 5'-phosphate)-2'-deoxyribonucleotide-DNA = a 3'-end 2'-deoxyribonucleotide-(2,3-dehydro-2,3-deoxyribose 5'-phosphate)-DNA + a 5'-end 5'-phospho-2'-deoxyribonucleoside-DNA + H(+). Functionally, repair polymerase that plays a key role in base-excision repair. During this process, the damaged base is excised by specific DNA glycosylases, the DNA backbone is nicked at the abasic site by an apurinic/apyrimidic (AP) endonuclease, and POLB removes 5'-deoxyribose-phosphate from the preincised AP site acting as a 5'-deoxyribose-phosphate lyase (5'-dRP lyase); through its DNA polymerase activity, it adds one nucleotide to the 3' end of the arising single-nucleotide gap. Conducts 'gap-filling' DNA synthesis in a stepwise distributive fashion rather than in a processive fashion as for other DNA polymerases. It is also able to cleave sugar-phosphate bonds 3' to an intact AP site, acting as an AP lyase. In Danio rerio (Zebrafish), this protein is DNA polymerase beta (polb).